The following is a 498-amino-acid chain: Cytochrome P450 monooxygenase astB (498 aa).

Residues 7 to 27 (FTTMPVVLLVGLVLYQLLAFT) form a helical membrane-spanning segment. Asn-237, Asn-248, and Asn-346 each carry an N-linked (GlcNAc...) asparagine glycan. Cys-425 is a binding site for heme.

Belongs to the cytochrome P450 family. Heme serves as cofactor.

The protein localises to the membrane. The catalysed reaction is preasperterpenoid A + 4 reduced [NADPH--hemoprotein reductase] + 4 O2 = asperterpenoid A + 4 oxidized [NADPH--hemoprotein reductase] + 5 H2O + 5 H(+). It catalyses the reaction asperterpenoid A + 2 reduced [NADPH--hemoprotein reductase] + 2 O2 = asperterpenoid B + 2 oxidized [NADPH--hemoprotein reductase] + 3 H2O + 3 H(+). It functions in the pathway secondary metabolite biosynthesis; terpenoid biosynthesis. Its function is as follows. Cytochrome P450 monooxygenase; part of the gene cluster that mediates the biosynthesis of the asperterpenoids, sesterterpenes that exhibit anti-tuberculosis activity. The first step of the pathway is performed by the sesterterpene synthase astC that possesses both prenyl transferase and terpene cyclase activity, converting isopentenyl diphosphate and dimethylallyl diphosphate into geranylfarnesyl diphosphate (GFPP) and further converting GFPP into preasperterpenoid A, respectively. The cytochrome P450 monooxygenase astB then dually oxidizes preasperterpenoid A to produce asperterpenoid A along with a minor product, asperterpenoid B. Finally, the cytochrome P450 monooxygenase astA converts asperterpenoid A into asperterpenoid C. The sequence is that of Cytochrome P450 monooxygenase astB from Talaromyces wortmannii (Penicillium wortmannii).